We begin with the raw amino-acid sequence, 393 residues long: Histidinol dehydrogenase (393 aa).

Residues Tyr-112, Gln-171, and Asn-194 each contribute to the NAD(+) site. Residues Thr-217, Gln-239, and His-242 each coordinate substrate. Positions 239 and 242 each coordinate Zn(2+). Active-site proton acceptor residues include Glu-293 and His-294. Substrate is bound by residues His-294, Asp-326, Glu-379, and His-384. Residue Asp-326 participates in Zn(2+) binding. His-384 lines the Zn(2+) pocket.

Belongs to the histidinol dehydrogenase family. The cofactor is Zn(2+).

It catalyses the reaction L-histidinol + 2 NAD(+) + H2O = L-histidine + 2 NADH + 3 H(+). Its pathway is amino-acid biosynthesis; L-histidine biosynthesis; L-histidine from 5-phospho-alpha-D-ribose 1-diphosphate: step 9/9. Functionally, catalyzes the sequential NAD-dependent oxidations of L-histidinol to L-histidinaldehyde and then to L-histidine. In Sulfolobus acidocaldarius (strain ATCC 33909 / DSM 639 / JCM 8929 / NBRC 15157 / NCIMB 11770), this protein is Histidinol dehydrogenase.